A 190-amino-acid polypeptide reads, in one-letter code: 3-isopropylmalate dehydratase small subunit (190 aa).

This sequence belongs to the LeuD family. LeuD type 1 subfamily. In terms of assembly, heterodimer of LeuC and LeuD.

It carries out the reaction (2R,3S)-3-isopropylmalate = (2S)-2-isopropylmalate. The protein operates within amino-acid biosynthesis; L-leucine biosynthesis; L-leucine from 3-methyl-2-oxobutanoate: step 2/4. Catalyzes the isomerization between 2-isopropylmalate and 3-isopropylmalate, via the formation of 2-isopropylmaleate. This is 3-isopropylmalate dehydratase small subunit from Staphylococcus aureus (strain USA300).